Consider the following 484-residue polypeptide: RxLR effector protein PexRD18 (484 aa).

Residues 1 to 20 (MSHQRILLLLMAAFFAWVSA) form the signal peptide. Residues 55–79 (RFLRLYDAEVRDTVRGDNDVDREER) carry the RxLR-dEER motif.

It belongs to the RxLR effector family.

The protein resides in the secreted. It is found in the host cell membrane. In terms of biological role, effector that enhances P.infestans colonization of Nicotiana benthamiana leaves. The polypeptide is RxLR effector protein PexRD18 (Phytophthora infestans (strain T30-4) (Potato late blight agent)).